An 832-amino-acid chain; its full sequence is Translation initiation factor IF-2 (832 aa).

The interval methionine 1–lysine 249 is disordered. The segment covering threonine 53–alanine 71 has biased composition (pro residues). The segment covering proline 89–alanine 144 has biased composition (basic and acidic residues). The span at alanine 145 to alanine 156 shows a compositional bias: low complexity. The span at proline 180–lysine 200 shows a compositional bias: basic and acidic residues. In terms of domain architecture, tr-type G spans proline 333–lysine 503. The G1 stretch occupies residues glycine 342–threonine 349. Glycine 342–threonine 349 contributes to the GTP binding site. The interval glycine 367–histidine 371 is G2. The interval aspartate 389–glycine 392 is G3. GTP-binding positions include aspartate 389–histidine 393 and asparagine 443–aspartate 446. The interval asparagine 443–aspartate 446 is G4. The tract at residues serine 479 to threonine 481 is G5.

Belongs to the TRAFAC class translation factor GTPase superfamily. Classic translation factor GTPase family. IF-2 subfamily.

Its subcellular location is the cytoplasm. Its function is as follows. One of the essential components for the initiation of protein synthesis. Protects formylmethionyl-tRNA from spontaneous hydrolysis and promotes its binding to the 30S ribosomal subunits. Also involved in the hydrolysis of GTP during the formation of the 70S ribosomal complex. This chain is Translation initiation factor IF-2, found in Erythrobacter litoralis (strain HTCC2594).